We begin with the raw amino-acid sequence, 167 residues long: Lipoprotein signal peptidase (167 aa).

Helical transmembrane passes span 7 to 27 (LFLL…KYWV), 61 to 81 (FSHW…LWLW), and 87 to 107 (NKFL…GNLI). Catalysis depends on residues D117 and D136. A helical membrane pass occupies residues 126–146 (IFYFAIFNLADSFITLGVIVI).

The protein belongs to the peptidase A8 family.

The protein localises to the cell inner membrane. It carries out the reaction Release of signal peptides from bacterial membrane prolipoproteins. Hydrolyzes -Xaa-Yaa-Zaa-|-(S,diacylglyceryl)Cys-, in which Xaa is hydrophobic (preferably Leu), and Yaa (Ala or Ser) and Zaa (Gly or Ala) have small, neutral side chains.. It participates in protein modification; lipoprotein biosynthesis (signal peptide cleavage). This protein specifically catalyzes the removal of signal peptides from prolipoproteins. This is Lipoprotein signal peptidase from Bartonella tribocorum (strain CIP 105476 / IBS 506).